A 285-amino-acid polypeptide reads, in one-letter code: Ribosomal RNA small subunit methyltransferase A (285 aa).

S-adenosyl-L-methionine is bound by residues histidine 27, leucine 29, glycine 54, glutamate 75, aspartate 100, and asparagine 120.

This sequence belongs to the class I-like SAM-binding methyltransferase superfamily. rRNA adenine N(6)-methyltransferase family. RsmA subfamily.

The protein resides in the cytoplasm. It carries out the reaction adenosine(1518)/adenosine(1519) in 16S rRNA + 4 S-adenosyl-L-methionine = N(6)-dimethyladenosine(1518)/N(6)-dimethyladenosine(1519) in 16S rRNA + 4 S-adenosyl-L-homocysteine + 4 H(+). Specifically dimethylates two adjacent adenosines (A1518 and A1519) in the loop of a conserved hairpin near the 3'-end of 16S rRNA in the 30S particle. May play a critical role in biogenesis of 30S subunits. This chain is Ribosomal RNA small subunit methyltransferase A, found in Phenylobacterium zucineum (strain HLK1).